A 131-amino-acid polypeptide reads, in one-letter code: Snaclec bitiscetin subunit alpha (131 aa).

3 cysteine pairs are disulfide-bonded: cysteine 4–cysteine 15, cysteine 32–cysteine 125, and cysteine 100–cysteine 117. The C-type lectin domain occupies 11–126 (YKGHCYKVFK…CGEKNPFICK (116 aa)).

This sequence belongs to the snaclec family. In terms of assembly, heterodimer of subunits alpha and beta; disulfide-linked. In terms of tissue distribution, expressed by the venom gland.

Its subcellular location is the secreted. Its function is as follows. Snaclec that binds to von Willebrand factor (VWF) and induces its interaction with GPIbalpha (GP1BA) (via the vWF A1 domain), resulting in platelet aggregation. The chain is Snaclec bitiscetin subunit alpha from Bitis arietans (African puff adder).